The sequence spans 408 residues: F-box A protein 155 (408 aa).

The tract at residues 1-22 (MSDRGSDQSSSSSDSAQHIPPK) is disordered.

The protein belongs to the FTH family.

The chain is F-box A protein 155 (fbxa-155) from Caenorhabditis elegans.